Reading from the N-terminus, the 256-residue chain is Homeobox-leucine zipper protein HOX18 (256 aa).

A disordered region spans residues 52 to 117 (YDHGRDEEQA…GGGGGTRKKL (66 aa)). The segment covering 102-112 (DGGSGSGGGGG) has biased composition (gly residues). Positions 112–171 (GTRKKLQLTKEQSTLLEDSFRVHNILSHAQKHELARQLKLKPRQVEVWFQNRRARTKLKQ) form a DNA-binding region, homeobox. Residues 170–214 (KQTEVDCEFLKRCCESLTEENKQLKHELMELRRLASAAAAAAGSQ) form a leucine-zipper region.

It belongs to the HD-ZIP homeobox family. Class II subfamily. Expressed in roots, leaf sheaths and blades and panicles.

Its subcellular location is the nucleus. Its function is as follows. Probable transcription factor. The sequence is that of Homeobox-leucine zipper protein HOX18 (HOX18) from Oryza sativa subsp. indica (Rice).